The chain runs to 134 residues: Putative pre-16S rRNA nuclease (134 aa).

The protein belongs to the YqgF nuclease family.

Its subcellular location is the cytoplasm. Functionally, could be a nuclease involved in processing of the 5'-end of pre-16S rRNA. This Helicobacter pylori (strain ATCC 700392 / 26695) (Campylobacter pylori) protein is Putative pre-16S rRNA nuclease.